Here is a 215-residue protein sequence, read N- to C-terminus: Thymidylate kinase (215 aa).

12-19 (GIDGAGKS) contacts ATP.

This sequence belongs to the thymidylate kinase family.

The catalysed reaction is dTMP + ATP = dTDP + ADP. Its function is as follows. Phosphorylation of dTMP to form dTDP in both de novo and salvage pathways of dTTP synthesis. This chain is Thymidylate kinase, found in Albidiferax ferrireducens (strain ATCC BAA-621 / DSM 15236 / T118) (Rhodoferax ferrireducens).